The primary structure comprises 190 residues: Small ribosomal subunit protein uS4c (190 aa).

The 61-residue stretch at 92-152 (RLDHVVYRAG…KSPSSAQLPP (61 aa)) folds into the S4 RNA-binding domain.

Belongs to the universal ribosomal protein uS4 family. As to quaternary structure, part of the 30S ribosomal subunit. Contacts protein S5. The interaction surface between S4 and S5 is involved in control of translational fidelity.

Its subcellular location is the plastid. The protein resides in the chloroplast. Its function is as follows. One of the primary rRNA binding proteins, it binds directly to 16S rRNA where it nucleates assembly of the body of the 30S subunit. In terms of biological role, with S5 and S12 plays an important role in translational accuracy. The protein is Small ribosomal subunit protein uS4c (rps4) of Cyanidioschyzon merolae (strain NIES-3377 / 10D) (Unicellular red alga).